Reading from the N-terminus, the 344-residue chain is MNWPNMPPGDRRWLWIGLTLPLCLLNGWVLLQILDYFQSPLRIFIIANLVAFILGYPVRWLQRYPRLKLPYAVALVLLTTAIILAVIGLLVIPKLVDQIRTVLQLLPHLNALGDRHLESLDNLSNQWEIPTNFRAWGRELSNEFPNQIRSITNQLINLLIWTAGSLVEAGFIFIMTVYLLLRGQTFWDGIFRWLPIDWRHKVRQRLRHSFQNYYIGQATVAALLGVSLIISLSIFQVPLALLFGMFVGFMAFFPFGGGTSIVLISIIASFQSIWLGIKVLAIATVVDQVVENGLAPKLLGRVTGVHPVWILLSLMIGAKVAGLLGILVAIPIASFIRDMLNDFI.

8 helical membrane passes run 14–34 (LWIGLTLPLCLLNGWVLLQIL), 41–61 (LRIFIIANLVAFILGYPVRWL), 72–92 (AVALVLLTTAIILAVIGLLVI), 155–175 (LINLLIWTAGSLVEAGFIFIM), 215–235 (IGQATVAALLGVSLIISLSIF), 237–257 (VPLALLFGMFVGFMAFFPFGG), 262–282 (VLISIIASFQSIWLGIKVLAI), and 310–330 (ILLSLMIGAKVAGLLGILVAI).

It belongs to the autoinducer-2 exporter (AI-2E) (TC 2.A.86) family.

The protein localises to the cell membrane. The protein is Putative transport protein sll0060 of Synechocystis sp. (strain ATCC 27184 / PCC 6803 / Kazusa).